We begin with the raw amino-acid sequence, 114 residues long: Nucleoid-associated protein Cyan7425_0899 (114 aa).

This sequence belongs to the YbaB/EbfC family. As to quaternary structure, homodimer.

Its subcellular location is the cytoplasm. The protein resides in the nucleoid. In terms of biological role, binds to DNA and alters its conformation. May be involved in regulation of gene expression, nucleoid organization and DNA protection. This is Nucleoid-associated protein Cyan7425_0899 from Cyanothece sp. (strain PCC 7425 / ATCC 29141).